The primary structure comprises 271 residues: uncharacterized protein (271 aa).

Solcar repeat units follow at residues 3–74, 81–163, and 171–268; these read VQTL…AKRR, EGAI…SKKY, and DISV…FKSK. Helical transmembrane passes span 5-26, 49-69, 84-104, 138-158, 170-190, and 240-261; these read TLMAASAGAVASRLLCHPIDTI, GLPISLTLITPATCLYLSTYV, ILYSICGMTAEVVSSFVWTPL, GYWMGVAIYLPTTVSWWVCYE, WDISVIAPICSALGTVVATTI, and FTRGLFTRMCYIMPSGMISMSV.

It belongs to the mitochondrial carrier (TC 2.A.29) family.

The protein resides in the mitochondrion inner membrane. This is an uncharacterized protein from Schizosaccharomyces pombe (strain 972 / ATCC 24843) (Fission yeast).